The primary structure comprises 213 residues: Orotate phosphoribosyltransferase (213 aa).

Position 26 (lysine 26) interacts with 5-phospho-alpha-D-ribose 1-diphosphate. Orotate is bound at residue 34–35 (FF). Residues 72 to 73 (YK), arginine 99, lysine 100, lysine 103, histidine 105, and 124 to 132 (DDVITAGTA) each bind 5-phospho-alpha-D-ribose 1-diphosphate. The orotate site is built by threonine 128 and arginine 156.

This sequence belongs to the purine/pyrimidine phosphoribosyltransferase family. PyrE subfamily. In terms of assembly, homodimer. It depends on Mg(2+) as a cofactor.

The catalysed reaction is orotidine 5'-phosphate + diphosphate = orotate + 5-phospho-alpha-D-ribose 1-diphosphate. It participates in pyrimidine metabolism; UMP biosynthesis via de novo pathway; UMP from orotate: step 1/2. Its function is as follows. Catalyzes the transfer of a ribosyl phosphate group from 5-phosphoribose 1-diphosphate to orotate, leading to the formation of orotidine monophosphate (OMP). The protein is Orotate phosphoribosyltransferase of Vibrio vulnificus (strain CMCP6).